The sequence spans 87 residues: MANHKSAEKRARQTIKKTERNRFYRTRLKNITKAVREAAANGDKNAANEALKVANKSIHAMVSRGFIKKQTASRRVSRLALLVNKIA.

The disordered stretch occupies residues 1–21 (MANHKSAEKRARQTIKKTERN).

It belongs to the bacterial ribosomal protein bS20 family.

In terms of biological role, binds directly to 16S ribosomal RNA. This chain is Small ribosomal subunit protein bS20, found in Campylobacter jejuni subsp. jejuni serotype O:23/36 (strain 81-176).